Consider the following 287-residue polypeptide: Probable aquaporin PIP1-5 (287 aa).

N-acetylmethionine is present on Met1. The interval 1–34 (MEGKEEDVNVGANKFPERQPIGTAAQTESKDYKE) is disordered. Residues 1-55 (MEGKEEDVNVGANKFPERQPIGTAAQTESKDYKEPPPAPFFEPGELKSWSFYRAG) lie on the Cytoplasmic side of the membrane. Residues 56–76 (IAEFIATFLFLYVTVLTVMGV) traverse the membrane as a helical segment. Residues 77 to 92 (KRAPNMCASVGIQGIA) lie on the Extracellular side of the membrane. The chain crosses the membrane as a helical span at residues 93 to 113 (WAFGGMIFALVYCTAGISGGH). At 114 to 133 (INPAVTFGLFLARKLSLTRA) the chain is on the cytoplasmic side. Residues 115–117 (NPA) carry the NPA 1 motif. A helical membrane pass occupies residues 134–154 (LFYIVMQCLGAICGAGVVKGF). At 155–175 (QPGLYQTNGGGANVVAHGYTK) the chain is on the extracellular side. The chain crosses the membrane as a helical span at residues 176–196 (GSGLGAEIVGTFVLVYTVFSA). The Cytoplasmic segment spans residues 197–209 (TDAKRSARDSHVP). A helical membrane pass occupies residues 210-230 (ILAPLPIGFAVFLVHLATIPI). Residues 231–257 (TGTGINPARSLGAAIIYNKDHAWDDHW) lie on the Extracellular side of the membrane. The NPA 2 motif lies at 236 to 238 (NPA). Residues 258–278 (IFWVGPFIGAALAALYHQIVI) traverse the membrane as a helical segment. Residues 279-287 (RAIPFKSKT) lie on the Cytoplasmic side of the membrane. Ser285 carries the phosphoserine modification.

It belongs to the MIP/aquaporin (TC 1.A.8) family. PIP (TC 1.A.8.11) subfamily. As to expression, predominantly expressed in green siliques. Also expressed above ground, in roots and flower buds.

The protein localises to the cell membrane. Its function is as follows. Aquaporins facilitate the transport of water and small neutral solutes across cell membranes. This chain is Probable aquaporin PIP1-5 (PIP1-5), found in Arabidopsis thaliana (Mouse-ear cress).